The primary structure comprises 146 residues: Hemoglobin subunit beta (146 aa).

At V1 the chain carries N-acetylvaline. Residues 2-146 form the Globin domain; sequence HLTDAEKAAI…VATALGHKYH (145 aa). K59 carries the post-translational modification N6-acetyllysine. H63 is a heme b binding site. The residue at position 82 (K82) is an N6-acetyllysine. H92 serves as a coordination point for heme b. At C93 the chain carries S-nitrosocysteine. An N6-acetyllysine modification is found at K144.

It belongs to the globin family. In terms of assembly, heterotetramer of two alpha chains and two beta chains. Red blood cells.

Its function is as follows. Involved in oxygen transport from the lung to the various peripheral tissues. This is Hemoglobin subunit beta (HBB) from Ondatra zibethicus (Muskrat).